We begin with the raw amino-acid sequence, 299 residues long: GTPase Era (299 aa).

The region spanning 4-171 (KSGFVAILGR…VDILSENLDE (168 aa)) is the Era-type G domain. The tract at residues 12-19 (GRPNVGKS) is G1. Residue 12–19 (GRPNVGKS) coordinates GTP. A G2 region spans residues 38–42 (QTTRN). The tract at residues 59–62 (DTPG) is G3. Residues 59 to 63 (DTPGI) and 121 to 124 (NKID) each bind GTP. The interval 121–124 (NKID) is G4. A G5 region spans residues 150 to 152 (ISA). One can recognise a KH type-2 domain in the interval 202–280 (TREEIPHSVA…FLETWVKVKK (79 aa)).

It belongs to the TRAFAC class TrmE-Era-EngA-EngB-Septin-like GTPase superfamily. Era GTPase family. As to quaternary structure, monomer.

Its subcellular location is the cytoplasm. The protein localises to the cell membrane. In terms of biological role, an essential GTPase that binds both GDP and GTP, with rapid nucleotide exchange. Plays a role in 16S rRNA processing and 30S ribosomal subunit biogenesis and possibly also in cell cycle regulation and energy metabolism. This chain is GTPase Era, found in Streptococcus pneumoniae (strain Hungary19A-6).